The primary structure comprises 428 residues: Enolase (428 aa).

Residue glutamine 163 participates in (2R)-2-phosphoglycerate binding. The Proton donor role is filled by glutamate 205. Residues aspartate 242, glutamate 286, and aspartate 313 each contribute to the Mg(2+) site. (2R)-2-phosphoglycerate is bound by residues lysine 338, arginine 367, serine 368, and lysine 389. Lysine 338 acts as the Proton acceptor in catalysis.

The protein belongs to the enolase family. Requires Mg(2+) as cofactor.

It is found in the cytoplasm. Its subcellular location is the secreted. It localises to the cell surface. The enzyme catalyses (2R)-2-phosphoglycerate = phosphoenolpyruvate + H2O. It functions in the pathway carbohydrate degradation; glycolysis; pyruvate from D-glyceraldehyde 3-phosphate: step 4/5. In terms of biological role, catalyzes the reversible conversion of 2-phosphoglycerate (2-PG) into phosphoenolpyruvate (PEP). It is essential for the degradation of carbohydrates via glycolysis. The chain is Enolase from Geobacter sulfurreducens (strain ATCC 51573 / DSM 12127 / PCA).